A 64-amino-acid polypeptide reads, in one-letter code: UPF0434 protein BAB2_0345 (64 aa).

It belongs to the UPF0434 family.

In Brucella abortus (strain 2308), this protein is UPF0434 protein BAB2_0345.